Reading from the N-terminus, the 714-residue chain is Polyribonucleotide nucleotidyltransferase (714 aa).

Residues aspartate 490 and aspartate 496 each coordinate Mg(2+). Positions 556–615 (PRIETMQIPTDKIREVIGSGGKVIREIVEVSGAKVDINDDGIIKIASPNGDSIKKAYDMI) constitute a KH domain. The S1 motif domain maps to 625–693 (GQVYTGKVVK…DRGKVRLSMK (69 aa)).

It belongs to the polyribonucleotide nucleotidyltransferase family. Mg(2+) is required as a cofactor.

It is found in the cytoplasm. It carries out the reaction RNA(n+1) + phosphate = RNA(n) + a ribonucleoside 5'-diphosphate. Functionally, involved in mRNA degradation. Catalyzes the phosphorolysis of single-stranded polyribonucleotides processively in the 3'- to 5'-direction. The protein is Polyribonucleotide nucleotidyltransferase of Ruegeria pomeroyi (strain ATCC 700808 / DSM 15171 / DSS-3) (Silicibacter pomeroyi).